A 251-amino-acid chain; its full sequence is Protection of telomeres homolog 2 (251 aa).

Residues 221 to 251 (ELDNWPEGPPKTFAEAIARANNSRRPRDPPQ) are disordered.

Belongs to the telombin family.

It localises to the nucleus. It is found in the chromosome. The protein localises to the telomere. Its function is as follows. Telomeric DNA-binding protein, which binds to two or more single-stranded G-rich repeat sequences (G-strand), with high specificity to the 5'-TTAGGC-3' sequence. In addition, repeat sequence binding requires a 3' single-stranded telomeric overhang. Acts redundantly with pot-1 to negatively regulate telomerase-mediated telomere extension. Also regulates telomere length by the telomerase-independent telomere maintenance pathway called ALT (alternative lengthening of telomeres). Does not appear to have a role in anchoring telomeres to the nuclear envelope. In Caenorhabditis elegans, this protein is Protection of telomeres homolog 2.